Here is a 359-residue protein sequence, read N- to C-terminus: DNA replication and repair protein RecF (359 aa).

30-37 (GPNGSGKT) contributes to the ATP binding site.

Belongs to the RecF family.

It is found in the cytoplasm. Functionally, the RecF protein is involved in DNA metabolism; it is required for DNA replication and normal SOS inducibility. RecF binds preferentially to single-stranded, linear DNA. It also seems to bind ATP. This chain is DNA replication and repair protein RecF, found in Vibrio vulnificus (strain YJ016).